Reading from the N-terminus, the 48-residue chain is uncharacterized protein (48 aa).

Residues 21-43 traverse the membrane as a helical segment; the sequence is SIFVSLGVFAVSVAILKSRLGNF.

The protein resides in the membrane. This is an uncharacterized protein from Schizosaccharomyces pombe (strain 972 / ATCC 24843) (Fission yeast).